The sequence spans 542 residues: Protein MPA43 (542 aa).

The protein is Protein MPA43 (MPA43) of Saccharomyces cerevisiae (strain ATCC 204508 / S288c) (Baker's yeast).